The chain runs to 464 residues: V-type ATP synthase beta chain (464 aa).

The protein belongs to the ATPase alpha/beta chains family.

In terms of biological role, produces ATP from ADP in the presence of a proton gradient across the membrane. The V-type beta chain is a regulatory subunit. The chain is V-type ATP synthase beta chain from Streptococcus sanguinis (strain SK36).